Here is a 271-residue protein sequence, read N- to C-terminus: 3-methyl-2-oxobutanoate hydroxymethyltransferase (271 aa).

Mg(2+) contacts are provided by Asp-53 and Asp-92. 3-methyl-2-oxobutanoate-binding positions include 53–54 (DS), Asp-92, and Lys-120. Glu-122 contacts Mg(2+). The active-site Proton acceptor is Glu-189.

It belongs to the PanB family. In terms of assembly, homodecamer; pentamer of dimers. Mg(2+) is required as a cofactor.

Its subcellular location is the cytoplasm. The enzyme catalyses 3-methyl-2-oxobutanoate + (6R)-5,10-methylene-5,6,7,8-tetrahydrofolate + H2O = 2-dehydropantoate + (6S)-5,6,7,8-tetrahydrofolate. The protein operates within cofactor biosynthesis; (R)-pantothenate biosynthesis; (R)-pantoate from 3-methyl-2-oxobutanoate: step 1/2. Functionally, catalyzes the reversible reaction in which hydroxymethyl group from 5,10-methylenetetrahydrofolate is transferred onto alpha-ketoisovalerate to form ketopantoate. The polypeptide is 3-methyl-2-oxobutanoate hydroxymethyltransferase (Burkholderia thailandensis (strain ATCC 700388 / DSM 13276 / CCUG 48851 / CIP 106301 / E264)).